Here is a 612-residue protein sequence, read N- to C-terminus: Chaperone protein DnaK (612 aa).

The residue at position 173 (Thr-173) is a Phosphothreonine; by autocatalysis. The interval 576-612 (AAKAQQAEGGANAEGKKADDNVVDAEYEEVKDDETKK) is disordered. Low complexity predominate over residues 578 to 588 (KAQQAEGGANA). Over residues 596–612 (NVVDAEYEEVKDDETKK) the composition is skewed to acidic residues.

It belongs to the heat shock protein 70 family.

Its function is as follows. Acts as a chaperone. The sequence is that of Chaperone protein DnaK from Bacillus velezensis (strain DSM 23117 / BGSC 10A6 / LMG 26770 / FZB42) (Bacillus amyloliquefaciens subsp. plantarum).